The sequence spans 318 residues: Glycine--tRNA ligase alpha subunit (318 aa).

Residues 298-318 (EAGGSSPSTSRQGEAPRGESQ) form a disordered region. The segment covering 300–309 (GGSSPSTSRQ) has biased composition (polar residues).

This sequence belongs to the class-II aminoacyl-tRNA synthetase family. As to quaternary structure, tetramer of two alpha and two beta subunits.

It is found in the cytoplasm. The enzyme catalyses tRNA(Gly) + glycine + ATP = glycyl-tRNA(Gly) + AMP + diphosphate. The chain is Glycine--tRNA ligase alpha subunit from Rhodopseudomonas palustris (strain BisB18).